The primary structure comprises 290 residues: Shikimate dehydrogenase (NADP(+)) (290 aa).

Residues 21–23 (SLS) and Thr-68 contribute to the shikimate site. Lys-72 functions as the Proton acceptor in the catalytic mechanism. NADP(+) is bound at residue Glu-84. The shikimate site is built by Asn-93 and Asp-108. NADP(+) contacts are provided by residues 132–136 (GYGGA) and Leu-230. Position 232 (Tyr-232) interacts with shikimate. Gly-253 lines the NADP(+) pocket.

Belongs to the shikimate dehydrogenase family. Homodimer.

The catalysed reaction is shikimate + NADP(+) = 3-dehydroshikimate + NADPH + H(+). The protein operates within metabolic intermediate biosynthesis; chorismate biosynthesis; chorismate from D-erythrose 4-phosphate and phosphoenolpyruvate: step 4/7. Its function is as follows. Involved in the biosynthesis of the chorismate, which leads to the biosynthesis of aromatic amino acids. Catalyzes the reversible NADPH linked reduction of 3-dehydroshikimate (DHSA) to yield shikimate (SA). This Synechocystis sp. (strain ATCC 27184 / PCC 6803 / Kazusa) protein is Shikimate dehydrogenase (NADP(+)).